The primary structure comprises 61 residues: Insect toxin BsIT1 (61 aa).

One can recognise an LCN-type CS-alpha/beta domain in the interval 1-61 (DGYILMRNGC…KHLNYHKKTC (61 aa)). 4 disulfide bridges follow: C10–C61, C14–C35, C21–C42, and C25–C44.

This sequence belongs to the long (4 C-C) scorpion toxin superfamily. Sodium channel inhibitor family. Beta subfamily. Expressed by the venom gland.

The protein localises to the secreted. Depressant insect beta-toxins cause a transient contraction paralysis followed by a slow flaccid paralysis. They bind voltage-independently at site-4 of sodium channels (Nav) and shift the voltage of activation toward more negative potentials thereby affecting sodium channel activation and promoting spontaneous and repetitive firing. This toxin is active only on insects and causes a transient contraction paralysis followed by a slow flaccid paralysis. The sequence is that of Insect toxin BsIT1 from Hottentotta tamulus sindicus (Scorpion).